The following is a 65-amino-acid chain: Peptide ToAcP (65 aa).

The N-terminal stretch at 1–24 is a signal peptide; sequence MKMKMIVVISILLIVFSLSSKAMS. Positions 25–34 are excised as a propeptide; sequence LEDEQESVQR. Ala58 carries the alanine amide modification. The propeptide occupies 59–65; that stretch reads GRFDPAV.

As to expression, expressed by the venom gland.

It localises to the secreted. In terms of biological role, helical wheel projections predict no hydrophobic face, suggesting a non-amphipathic peptide. Does not show antifungal activity. This Tityus obscurus (Amazonian scorpion) protein is Peptide ToAcP.